Reading from the N-terminus, the 288-residue chain is Bifunctional protein FolD (288 aa).

166–168 serves as a coordination point for NADP(+); that stretch reads GRS.

Belongs to the tetrahydrofolate dehydrogenase/cyclohydrolase family. In terms of assembly, homodimer.

It carries out the reaction (6R)-5,10-methylene-5,6,7,8-tetrahydrofolate + NADP(+) = (6R)-5,10-methenyltetrahydrofolate + NADPH. The enzyme catalyses (6R)-5,10-methenyltetrahydrofolate + H2O = (6R)-10-formyltetrahydrofolate + H(+). Its pathway is one-carbon metabolism; tetrahydrofolate interconversion. Its function is as follows. Catalyzes the oxidation of 5,10-methylenetetrahydrofolate to 5,10-methenyltetrahydrofolate and then the hydrolysis of 5,10-methenyltetrahydrofolate to 10-formyltetrahydrofolate. The sequence is that of Bifunctional protein FolD from Levilactobacillus brevis (strain ATCC 367 / BCRC 12310 / CIP 105137 / JCM 1170 / LMG 11437 / NCIMB 947 / NCTC 947) (Lactobacillus brevis).